Reading from the N-terminus, the 648-residue chain is Acetyl-coenzyme A synthetase (648 aa).

CoA-binding positions include R190–R193 and T310. Residues G386 to P388, D410 to T415, D499, and R514 contribute to the ATP site. S522 provides a ligand contact to CoA. R525 contacts ATP. Mg(2+) contacts are provided by V536, H538, and V541. CoA is bound at residue R583. Position 608 is an N6-acetyllysine (K608).

The protein belongs to the ATP-dependent AMP-binding enzyme family. The cofactor is Mg(2+). Post-translationally, acetylated. Deacetylation by the SIR2-homolog deacetylase activates the enzyme.

The enzyme catalyses acetate + ATP + CoA = acetyl-CoA + AMP + diphosphate. Catalyzes the conversion of acetate into acetyl-CoA (AcCoA), an essential intermediate at the junction of anabolic and catabolic pathways. AcsA undergoes a two-step reaction. In the first half reaction, AcsA combines acetate with ATP to form acetyl-adenylate (AcAMP) intermediate. In the second half reaction, it can then transfer the acetyl group from AcAMP to the sulfhydryl group of CoA, forming the product AcCoA. The sequence is that of Acetyl-coenzyme A synthetase from Methylobacterium radiotolerans (strain ATCC 27329 / DSM 1819 / JCM 2831 / NBRC 15690 / NCIMB 10815 / 0-1).